Consider the following 238-residue polypeptide: Sugar fermentation stimulation protein homolog (238 aa).

It belongs to the SfsA family.

This is Sugar fermentation stimulation protein homolog from Pseudomonas entomophila (strain L48).